A 318-amino-acid polypeptide reads, in one-letter code: Endochitinase 1 (318 aa).

A signal peptide spans 1 to 18; the sequence is EFTTLFLLFSVLLLSASA. The Chitin-binding type-1 domain maps to 19–60; it reads EQCGSQAGGALCASGLCCSKFGWCGDTNDYCGPGNCQSQCPG. 7 cysteine pairs are disulfide-bonded: C21/C36, C30/C42, C35/C49, C54/C58, C89/C152, C164/C172, and C271/C303. E134 serves as the catalytic Proton donor. Residues 312 to 318 constitute a propeptide, removed in mature form, vacuolar targeting; that stretch reads GLLVDTM.

It belongs to the glycosyl hydrolase 19 family. Chitinase class I subfamily.

The protein resides in the vacuole. It carries out the reaction Random endo-hydrolysis of N-acetyl-beta-D-glucosaminide (1-&gt;4)-beta-linkages in chitin and chitodextrins.. Its function is as follows. Defense against chitin-containing fungal pathogens. The sequence is that of Endochitinase 1 (CHTB1) from Solanum tuberosum (Potato).